The following is a 440-amino-acid chain: Thymidine phosphorylase (440 aa).

This sequence belongs to the thymidine/pyrimidine-nucleoside phosphorylase family. In terms of assembly, homodimer.

The catalysed reaction is thymidine + phosphate = 2-deoxy-alpha-D-ribose 1-phosphate + thymine. It functions in the pathway pyrimidine metabolism; dTMP biosynthesis via salvage pathway; dTMP from thymine: step 1/2. Its function is as follows. The enzymes which catalyze the reversible phosphorolysis of pyrimidine nucleosides are involved in the degradation of these compounds and in their utilization as carbon and energy sources, or in the rescue of pyrimidine bases for nucleotide synthesis. The protein is Thymidine phosphorylase of Salmonella choleraesuis (strain SC-B67).